Consider the following 494-residue polypeptide: Sucrose-6-phosphate hydrolase (494 aa).

Residues 45–48, glutamine 64, 107–108, 168–169, and glutamate 223 contribute to the substrate site; these read LLND, YS, and RD. The active site involves aspartate 48.

The protein belongs to the glycosyl hydrolase 32 family.

It catalyses the reaction Hydrolysis of terminal non-reducing beta-D-fructofuranoside residues in beta-D-fructofuranosides.. Its pathway is glycan biosynthesis; sucrose metabolism. The chain is Sucrose-6-phosphate hydrolase (scrB) from Staphylococcus xylosus.